The primary structure comprises 245 residues: MIRMSKRLGVILFVSCISINSFAKSMEADVNAVPEYNYDNIPYYENEGSLLVKMRLNGVFAHAKQKNLPAPTVPQPLPVGEFVKNGYGGDISTTIFFNNYFATELSLGFNVLRTKNSVLSNVSYNYGVGATPGKSKPLYMIPATITGQFHVAPFGGIRPYVGLGYHGSYMITQSSGIKIRNGNGFVGQIGLDFYAKDDTVINLDIKQYYLNPKIVYKPSLVGNQNITSRTKLNPLVVSIGIGFSF.

An N-terminal signal peptide occupies residues 1–23 (MIRMSKRLGVILFVSCISINSFA).

Belongs to the OmpW/AlkL family.

It is found in the cell outer membrane. The chain is Putative outer membrane protein RBE_0022 from Rickettsia bellii (strain RML369-C).